Here is a 525-residue protein sequence, read N- to C-terminus: GMP synthase [glutamine-hydrolyzing] (525 aa).

Positions 9 to 207 (RILILDFGSQ…VRDICQCEAL (199 aa)) constitute a Glutamine amidotransferase type-1 domain. C86 acts as the Nucleophile in catalysis. Active-site residues include H181 and E183. The region spanning 208 to 400 (WTPAKIIDDA…LGLPYDMLYR (193 aa)) is the GMPS ATP-PPase domain. 235–241 (SGGVDSS) lines the ATP pocket.

Homodimer.

The catalysed reaction is XMP + L-glutamine + ATP + H2O = GMP + L-glutamate + AMP + diphosphate + 2 H(+). Its pathway is purine metabolism; GMP biosynthesis; GMP from XMP (L-Gln route): step 1/1. In terms of biological role, catalyzes the synthesis of GMP from XMP. The chain is GMP synthase [glutamine-hydrolyzing] from Escherichia fergusonii (strain ATCC 35469 / DSM 13698 / CCUG 18766 / IAM 14443 / JCM 21226 / LMG 7866 / NBRC 102419 / NCTC 12128 / CDC 0568-73).